The chain runs to 1516 residues: Neurite extension and migration factor (1516 aa).

A compositionally biased stretch (basic and acidic residues) spans 380-405; sequence LDKKKGKEEGQEDKGVEKKDGKDNGE. Disordered stretches follow at residues 380–440, 589–610, 1158–1225, 1373–1419, and 1437–1479; these read LDKK…GSFS, QKKK…SQKQ, TFND…STKK, TPQE…PGYN, and LGNN…ESGT. 3 stretches are compositionally biased toward polar residues: residues 596–610, 1158–1170, and 1185–1194; these read NTNT…SQKQ, TFND…STNN, and GAMNQSSSQK. Positions 1443-1453 are enriched in basic residues; it reads THKKLYRHKSS. Positions 1456–1479 are enriched in basic and acidic residues; it reads ALRDEKCKGKHMEREQVHKDESGT.

As to expression, highly expressed in fetal and adult brain, predominantly in the cerebral cortex and the cerebellum. Also expressed in other tissues but to a lesser extent.

It localises to the nucleus. The protein localises to the cytoplasm. In terms of biological role, involved in neurite outgrowth by regulating cell-cell adhesion via the N-cadherin signaling pathway. May act by regulating expression of protein-coding genes, such as N-cadherins and integrin beta-1 (ITGB1). The chain is Neurite extension and migration factor from Homo sapiens (Human).